A 1466-amino-acid chain; its full sequence is Retrovirus-related Pol polyprotein from transposon RE1 (1466 aa).

Positions 227–270 (SHRNTTTTNNNNNGNRNNRYDNRNNNNNSKPWQQSSTNFHPNNN) are disordered. Positions 229 to 254 (RNTTTTNNNNNGNRNNRYDNRNNNNN) are enriched in low complexity. The segment covering 255–270 (SKPWQQSSTNFHPNNN) has biased composition (polar residues). The CCHC-type zinc-finger motif lies at 278–294 (KCQICGVQGHSAKRCSQ). Residue D334 is the For protease activity of the active site. The region spanning 519 to 682 (NSTRPLEYIY…SPFQKLFGTS (164 aa)) is the Integrase catalytic domain. The Mg(2+) site is built by D530 and D592. A disordered region spans residues 772–927 (WSPHTTLPTR…NNNQAPLNTH (156 aa)). Composition is skewed to low complexity over residues 796–827 (AATPPSSPSAPFRNSQVSSSNLDSSFSSSFPS) and 836–898 (QNGP…SSTS). The span at 899–912 (PTPPSILIHPPPPL) shows a compositional bias: pro residues. Positions 915-927 (IVNNNNQAPLNTH) are enriched in polar residues. Positions 982-1225 (NHTWDLVPPP…ITAKPVTTPM (244 aa)) constitute a Reverse transcriptase Ty1/copia-type domain.

It catalyses the reaction DNA(n) + a 2'-deoxyribonucleoside 5'-triphosphate = DNA(n+1) + diphosphate. The chain is Retrovirus-related Pol polyprotein from transposon RE1 (RE1) from Arabidopsis thaliana (Mouse-ear cress).